Here is a 394-residue protein sequence, read N- to C-terminus: Bifunctional enzyme IspD/IspF (394 aa).

The interval 1–230 is 2-C-methyl-D-erythritol 4-phosphate cytidylyltransferase; the sequence is MADTLAIVVA…AEALLGGGPV (230 aa). The interval 231-394 is 2-C-methyl-D-erythritol 2,4-cyclodiphosphate synthase; the sequence is LVGFGYDVHR…RIVLPGDRVL (164 aa). The a divalent metal cation site is built by Asp237 and His239. Residues 237 to 239 and 263 to 264 each bind 4-CDP-2-C-methyl-D-erythritol 2-phosphate; these read DVH and HS. His271 contributes to the a divalent metal cation binding site. 4-CDP-2-C-methyl-D-erythritol 2-phosphate-binding positions include 285 to 287, 290 to 294, 361 to 364, and Phe368; these read DIG, FPDDD, and TTTE.

It in the N-terminal section; belongs to the IspD/TarI cytidylyltransferase family. IspD subfamily. The protein in the C-terminal section; belongs to the IspF family. Requires a divalent metal cation as cofactor.

The catalysed reaction is 2-C-methyl-D-erythritol 4-phosphate + CTP + H(+) = 4-CDP-2-C-methyl-D-erythritol + diphosphate. The enzyme catalyses 4-CDP-2-C-methyl-D-erythritol 2-phosphate = 2-C-methyl-D-erythritol 2,4-cyclic diphosphate + CMP. The protein operates within isoprenoid biosynthesis; isopentenyl diphosphate biosynthesis via DXP pathway; isopentenyl diphosphate from 1-deoxy-D-xylulose 5-phosphate: step 2/6. It functions in the pathway isoprenoid biosynthesis; isopentenyl diphosphate biosynthesis via DXP pathway; isopentenyl diphosphate from 1-deoxy-D-xylulose 5-phosphate: step 4/6. Its function is as follows. Bifunctional enzyme that catalyzes the formation of 4-diphosphocytidyl-2-C-methyl-D-erythritol from CTP and 2-C-methyl-D-erythritol 4-phosphate (MEP) (IspD), and catalyzes the conversion of 4-diphosphocytidyl-2-C-methyl-D-erythritol 2-phosphate (CDP-ME2P) to 2-C-methyl-D-erythritol 2,4-cyclodiphosphate (ME-CPP) with a corresponding release of cytidine 5-monophosphate (CMP) (IspF). In Desulforudis audaxviator (strain MP104C), this protein is Bifunctional enzyme IspD/IspF.